A 95-amino-acid chain; its full sequence is Large ribosomal subunit protein bL28 (95 aa).

The protein belongs to the bacterial ribosomal protein bL28 family.

In Zymomonas mobilis subsp. mobilis (strain ATCC 31821 / ZM4 / CP4), this protein is Large ribosomal subunit protein bL28.